Here is a 304-residue protein sequence, read N- to C-terminus: Fructose permease IIC component (304 aa).

A PTS EIIC type-2 domain is found at 1-304 (IHSADPKDPT…GIIKKPVEEK (304 aa)). 8 helical membrane-spanning segments follow: residues 20–40 (FIGSDNALKLIVAVLAGFIAM), 62–82 (NAGFLGGLIAGFLAGYVVILL), 98–118 (PVLIYPLLGIFITGVLMQFVI), 140–160 (NLVLMGIILGGMMAIDMGGPL), 181–201 (AAIMAGGMVPPLGIALATTFF), 214–234 (ITCYFMGAAFVTEGAIPFAAA), 238–258 (VIPAAVIGSAVAGGLTEFFRV), and 277–297 (LLYLLSIVIGAIVTAVILGII).

Its subcellular location is the cell membrane. In terms of biological role, the phosphoenolpyruvate-dependent sugar phosphotransferase system (PTS), a major carbohydrate active -transport system, catalyzes the phosphorylation of incoming sugar substrates concomitant with their translocation across the cell membrane. This system is involved in fructose transport. This is Fructose permease IIC component (fruA) from Bacillus amyloliquefaciens (Bacillus velezensis).